We begin with the raw amino-acid sequence, 504 residues long: ADP,ATP carrier protein 3 (504 aa).

12 helical membrane-spanning segments follow: residues 23–43, 59–79, 90–110, 146–166, 183–203, 230–250, 296–316, 329–349, 364–384, 386–406, 449–469, and 473–493; these read LKLF…FGAL, IISF…TILY, YVFY…AYII, YGLM…LMFW, PVLG…LVFF, EMLQ…MLLF, IALL…PWKA, VHFM…FMII, LLTP…IIFI, EIGS…VGAI, FGKS…PTAT, and IIIY…WDVV.

This sequence belongs to the ADP/ATP translocase tlc family.

The protein localises to the cell membrane. Provides the rickettsial cell with host ATP in exchange for rickettsial ADP. This is an obligate exchange system. This energy acquiring activity is an important component of rickettsial parasitism. The polypeptide is ADP,ATP carrier protein 3 (tlcC) (Rickettsia bellii (strain RML369-C)).